The following is a 491-amino-acid chain: Glycogen synthase 1 (491 aa).

Lys15 serves as a coordination point for ADP-alpha-D-glucose.

This sequence belongs to the glycosyltransferase 1 family. Bacterial/plant glycogen synthase subfamily.

It carries out the reaction [(1-&gt;4)-alpha-D-glucosyl](n) + ADP-alpha-D-glucose = [(1-&gt;4)-alpha-D-glucosyl](n+1) + ADP + H(+). The protein operates within glycan biosynthesis; glycogen biosynthesis. Functionally, synthesizes alpha-1,4-glucan chains using ADP-glucose. This chain is Glycogen synthase 1, found in Synechococcus sp. (strain JA-3-3Ab) (Cyanobacteria bacterium Yellowstone A-Prime).